We begin with the raw amino-acid sequence, 330 residues long: Global transcription regulator sge1 (330 aa).

Disordered stretches follow at residues 93 to 123 (PPGE…RNSV) and 239 to 306 (QYAP…HQPQ). The segment covering 105–114 (GKSTTQSGGI) has biased composition (polar residues). Residues 250-306 (QQPALQQQPQQQPQPQHQPQLQYQPQPHQHQPQLQYQPQQQHQPQQQYRPQPQHQPQ) show a composition bias toward low complexity.

The protein belongs to the MIT1/WOR1 family.

It is found in the nucleus. Its function is as follows. Global transcriptional regulator of pathogenicity. Acts as an activator of parasitic growth. Not essential for colonization or penetration of the root surface, but required for expression of genes encoding effectors that are secreted during infection. Involved in conidiogenesis, but is not required for conidial fitness, overall (colony) morphology, vegetative growth or carbon source utilization. This is Global transcription regulator sge1 from Fusarium oxysporum f. sp. lycopersici (strain 4287 / CBS 123668 / FGSC 9935 / NRRL 34936) (Fusarium vascular wilt of tomato).